Reading from the N-terminus, the 547-residue chain is Phosphomethylpyrimidine synthase (547 aa).

Residues 1 to 15 (MTETLSKTTEPSVTT) show a composition bias toward polar residues. The interval 1 to 36 (MTETLSKTTEPSVTTGPIPGSSKAYREVANPDGGPS) is disordered. Substrate is bound by residues asparagine 150, methionine 179, tyrosine 208, histidine 244, 264-266 (SRG), 305-308 (DGLR), and glutamate 344. Histidine 348 serves as a coordination point for Zn(2+). Position 371 (tyrosine 371) interacts with substrate. Histidine 412 contributes to the Zn(2+) binding site. [4Fe-4S] cluster-binding residues include cysteine 492, cysteine 495, and cysteine 500.

This sequence belongs to the ThiC family. The cofactor is [4Fe-4S] cluster.

It carries out the reaction 5-amino-1-(5-phospho-beta-D-ribosyl)imidazole + S-adenosyl-L-methionine = 4-amino-2-methyl-5-(phosphooxymethyl)pyrimidine + CO + 5'-deoxyadenosine + formate + L-methionine + 3 H(+). It participates in cofactor biosynthesis; thiamine diphosphate biosynthesis. In terms of biological role, catalyzes the synthesis of the hydroxymethylpyrimidine phosphate (HMP-P) moiety of thiamine from aminoimidazole ribotide (AIR) in a radical S-adenosyl-L-methionine (SAM)-dependent reaction. The sequence is that of Phosphomethylpyrimidine synthase from Mycobacterium leprae (strain Br4923).